Reading from the N-terminus, the 610-residue chain is 6(G)-fructosyltransferase (610 aa).

The Cytoplasmic segment spans residues 1–20 (MATSLQAPILGSRPPRRTLR). A helical; Signal-anchor for type II membrane protein membrane pass occupies residues 21-38 (FLSFALFSALVLVVASFS). Topologically, residues 39–610 (SRKSESGSGL…NQYYPFTSSN (572 aa)) are vacuolar. Substrate contacts are provided by residues 79 to 82 (YMND), Q98, W106, 141 to 142 (WT), and 207 to 208 (RD). D82 is an active-site residue. N-linked (GlcNAc...) asparagine glycans are attached at residues N215, N229, and N248. Position 266 (E266) interacts with substrate. N-linked (GlcNAc...) asparagine glycosylation occurs at N459. An intrachain disulfide couples C460 to C508. N580 and N597 each carry an N-linked (GlcNAc...) asparagine glycan.

This sequence belongs to the glycosyl hydrolase 32 family. Might be processed in two N-terminal and C-terminal proteolytic fragments.

It is found in the vacuole membrane. It catalyses the reaction [1-beta-D-fructofuranosyl-(2-&gt;1)-]m+1 alpha-D-glucopyranoside + [1-beta-D-fructofuranosyl-(2-&gt;1)-]n+1 alpha-D-glucopyranoside = [1-beta-D-fructofuranosyl-(2-&gt;1)-]m alpha-D-glucopyranoside + [1-beta-D-fructofuranosyl-(2-&gt;1)-]n+1 beta-D-fructofuranosyl-(2-&gt;6)-alpha-D-glucopyranoside (m &gt; 0, n &gt;= 0).. Its function is as follows. Involved in the synthesis of fructan of the inulin neoseries. Has no 1-FFT activity. This chain is 6(G)-fructosyltransferase (FT1), found in Asparagus officinalis (Garden asparagus).